An 885-amino-acid polypeptide reads, in one-letter code: Leucine--tRNA ligase (885 aa).

A 'HIGH' region motif is present at residues 48–58 (PYPSGKLHMGH). The 'KMSKS' region signature appears at 639-643 (TMSKS). K642 provides a ligand contact to ATP.

Belongs to the class-I aminoacyl-tRNA synthetase family.

The protein resides in the cytoplasm. It catalyses the reaction tRNA(Leu) + L-leucine + ATP = L-leucyl-tRNA(Leu) + AMP + diphosphate. This Bordetella avium (strain 197N) protein is Leucine--tRNA ligase.